Here is a 465-residue protein sequence, read N- to C-terminus: Juvenile hormone epoxide hydrolase 2 (465 aa).

The chain crosses the membrane as a helical span at residues 7-27 (ILWIAIVIGLGVLYYEITKEF). D224 serves as the catalytic Nucleophile. The active-site Proton donor is Y370. Residue H427 is the Proton acceptor of the active site.

The protein belongs to the peptidase S33 family.

Its subcellular location is the microsome membrane. The protein resides in the endoplasmic reticulum membrane. The enzyme catalyses cis-stilbene oxide + H2O = (1R,2R)-hydrobenzoin. It carries out the reaction 1-(4-methoxyphenyl)-N-methyl-N-[(3-methyloxetan-3-yl)methyl]methanamine + H2O = 2-{[(4-methoxybenzyl)(methyl)amino]methyl}-2-methylpropane-1,3-diol. In terms of biological role, catalyzes juvenile hormone hydrolysis. The sequence is that of Juvenile hormone epoxide hydrolase 2 from Ctenocephalides felis (Cat flea).